Here is a 411-residue protein sequence, read N- to C-terminus: Thyroid hormone receptor beta (411 aa).

The segment at 1–24 (MTPNSMTENGLPAWDKPKPCPDGE) is disordered. Residues 1 to 104 (MTPNSMTENG…IPSYLDKDEL (104 aa)) are modulating. The span at 15 to 24 (DKPKPCPDGE) shows a compositional bias: basic and acidic residues. 8 residues coordinate Zn(2+): cysteine 105, cysteine 108, cysteine 122, cysteine 125, cysteine 143, cysteine 149, cysteine 159, and cysteine 162. NR C4-type zinc fingers lie at residues 105-125 (CVVC…CEGC) and 143-167 (CKYE…FKKC). A DNA-binding region (nuclear receptor) is located at residues 105–179 (CVVCGDKATG…VGMATDLVLD (75 aa)). Positions 215–411 (QEWELIKTVT…EHYINYRRNS (197 aa)) constitute an NR LBD domain. Residues 242 to 411 (KFLPEDIGQA…EHYINYRRNS (170 aa)) are interaction with NR2F6. Residues arginine 280 and asparagine 329 each contribute to the 3,3',5-triiodo-L-thyronine site. Residues arginine 280 and asparagine 329 each coordinate L-thyroxine.

Belongs to the nuclear hormone receptor family. NR1 subfamily. In terms of assembly, binds DNA as a dimer; homodimer and heterodimer with RXRA. Interacts with the coactivators NCOA1/SRC1, NCOA2/GRIP1, NCOA7 and MED1/TRAP220 in a ligand-inducible manner. Interacts with the corepressor NCOR1 in absence of ligand. Interacts with C1D. Interacts with NR2F6; the interaction impairs the binding of the THRB homodimer and THRB:RXRB heterodimer to T3 response elements. Interacts with PRMT2 and THRSP. Interacts with TACC1; this interaction is decreased in the presence of thyroid hormone T3.

The protein resides in the nucleus. In terms of biological role, nuclear hormone receptor that can act as a repressor or activator of transcription. High affinity receptor for thyroid hormones, including triiodothyronine and thyroxine. In Ovis aries (Sheep), this protein is Thyroid hormone receptor beta (THRB).